Reading from the N-terminus, the 348-residue chain is D-amino-acid oxidase (348 aa).

The FAD site is built by Ala15, Ile18, Lys40, Ser52, Gly56, and Asn58. Tyr232 and Arg295 together coordinate (R)-lactate. Positions 232 and 295 each coordinate anthranilate. 5 residues coordinate FAD: Arg295, Ser323, Gly326, Tyr327, and Gln328.

It belongs to the DAMOX/DASOX family. It depends on FAD as a cofactor.

It localises to the peroxisome. It catalyses the reaction a D-alpha-amino acid + O2 + H2O = a 2-oxocarboxylate + H2O2 + NH4(+). The catalysed reaction is D-serine + O2 + H2O = 3-hydroxypyruvate + H2O2 + NH4(+). The enzyme catalyses D-alanine + O2 + H2O = pyruvate + H2O2 + NH4(+). It carries out the reaction D-arginine + O2 + H2O = 5-guanidino-2-oxopentanoate + H2O2 + NH4(+). In terms of biological role, catalyzes the oxidative deamination of D-amino acids with broad substrate specificity. Enables the organism to utilize D-amino acids as a source of nutrients. In Schizosaccharomyces pombe (strain 972 / ATCC 24843) (Fission yeast), this protein is D-amino-acid oxidase.